Reading from the N-terminus, the 166-residue chain is Lipoprotein signal peptidase (166 aa).

A run of 3 helical transmembrane segments spans residues 12-32 (WLWL…LILQ), 70-90 (WFFA…MYRS), and 102-122 (ALII…GFVV). Active-site residues include Asp-123 and Asp-141. The helical transmembrane segment at 137–157 (FNLADTAICIGAALIVLEGFL) threads the bilayer.

The protein belongs to the peptidase A8 family.

It localises to the cell inner membrane. The enzyme catalyses Release of signal peptides from bacterial membrane prolipoproteins. Hydrolyzes -Xaa-Yaa-Zaa-|-(S,diacylglyceryl)Cys-, in which Xaa is hydrophobic (preferably Leu), and Yaa (Ala or Ser) and Zaa (Gly or Ala) have small, neutral side chains.. Its pathway is protein modification; lipoprotein biosynthesis (signal peptide cleavage). In terms of biological role, this protein specifically catalyzes the removal of signal peptides from prolipoproteins. This chain is Lipoprotein signal peptidase, found in Salmonella typhi.